A 142-amino-acid polypeptide reads, in one-letter code: HTH-type transcriptional regulator MntR (142 aa).

The 63-residue stretch at 1 to 63 (MPTPSMEDYI…YEKYRGLVLT (63 aa)) folds into the HTH dtxR-type domain. 6 residues coordinate Mn(2+): Asp8, Glu11, His77, Glu99, Glu102, and His103.

The protein belongs to the DtxR/MntR family. Homodimer.

It localises to the cytoplasm. With respect to regulation, DNA binding is strongly activated by Mn(2+). Its function is as follows. Central regulator of manganese homeostasis. The sequence is that of HTH-type transcriptional regulator MntR from Bacillus cereus (strain AH820).